The following is a 616-amino-acid chain: Chaperone protein DnaK (616 aa).

Thr-174 carries the post-translational modification Phosphothreonine; by autocatalysis. The interval Gln-576–Thr-616 is disordered. Over residues Gly-583–Gly-593 the composition is skewed to gly residues.

Belongs to the heat shock protein 70 family.

Functionally, acts as a chaperone. This is Chaperone protein DnaK from Heliobacterium modesticaldum (strain ATCC 51547 / Ice1).